Consider the following 1516-residue polypeptide: Neurite extension and migration factor (1516 aa).

The span at 380 to 405 shows a compositional bias: basic and acidic residues; it reads LDKKKGKEEGQEDKGVEKKDGKDNGE. Disordered stretches follow at residues 380-440, 589-610, 1158-1225, 1373-1419, and 1437-1479; these read LDKK…GSFS, QKKK…SQKQ, TFND…STKK, TPQE…PGYN, and LGNN…ESGT. Composition is skewed to polar residues over residues 596-610, 1158-1170, and 1185-1194; these read NTNT…SQKQ, TFND…STNN, and GAMNQSSSQK. A compositionally biased stretch (basic residues) spans 1443 to 1453; the sequence is THKKLYRHKSS. Basic and acidic residues predominate over residues 1456–1479; that stretch reads ALRDEKCKGKHMEREQVHKDESGT.

Highly expressed in fetal and adult brain, predominantly in the cerebral cortex and the cerebellum. Also expressed in other tissues but to a lesser extent.

The protein localises to the nucleus. It is found in the cytoplasm. Involved in neurite outgrowth by regulating cell-cell adhesion via the N-cadherin signaling pathway. May act by regulating expression of protein-coding genes, such as N-cadherins and integrin beta-1 (ITGB1). This chain is Neurite extension and migration factor, found in Homo sapiens (Human).